The following is a 157-amino-acid chain: Small ribosomal subunit protein uS7 (157 aa).

The protein belongs to the universal ribosomal protein uS7 family. As to quaternary structure, part of the 30S ribosomal subunit. Contacts proteins S9 and S11.

Functionally, one of the primary rRNA binding proteins, it binds directly to 16S rRNA where it nucleates assembly of the head domain of the 30S subunit. Is located at the subunit interface close to the decoding center, probably blocks exit of the E-site tRNA. The chain is Small ribosomal subunit protein uS7 from Chlamydia trachomatis serovar L2 (strain ATCC VR-902B / DSM 19102 / 434/Bu).